Here is a 148-residue protein sequence, read N- to C-terminus: RxLR effector protein SFI7 (148 aa).

The N-terminal stretch at 1–22 is a signal peptide; that stretch reads MRAYFVLLVAATAILTYGGATA. The N-linked (GlcNAc...) asparagine glycan is linked to Asn32. The RxLR-dEER motif lies at 44–58; sequence RSLRVAPSGGNGEER.

It belongs to the RxLR effector family.

The protein localises to the secreted. It is found in the host cytoplasm. Its subcellular location is the host cell membrane. Effector that suppresses flg22-induced post-translational MAP kinase activation in tomato but not in Arabidopsis. The perception of highly conserved pathogen- or microbe-associated molecular patterns (PAMPs/MAMPs), such as flg22, triggers converging signaling pathways recruiting MAP kinase cascades and inducing transcriptional re-programming, yielding a generic antimicrobial response. Also partially attenuates INF1-triggered cell death. This chain is RxLR effector protein SFI7, found in Phytophthora infestans (strain T30-4) (Potato late blight agent).